We begin with the raw amino-acid sequence, 1877 residues long: Neuron navigator 1 (1877 aa).

Met1 is modified (N-acetylmethionine). The interval 1 to 59 (MLGSSVKSVQPEVELSSGGGDEGADEPRGAGRKAAAADGRGMLPKRAKAPGGGGGMAKA) is disordered. Residues 32–41 (RKAAAADGRG) show a composition bias toward low complexity. A phosphoserine mark is found at Ser90, Ser142, and Ser152. Positions 114–225 (DMAKAPKGLG…PVPSAKGQEE (112 aa)) are disordered. Thr159 carries the phosphothreonine modification. Residues Ser194 and Ser199 each carry the phosphoserine modification. Residues 205–214 (SSKAKAQKSS) show a composition bias toward low complexity. Positions 255–280 (ESQRKRTVQNVLDLRQNLEETMSSLR) form a coiled coil. Residues 294–336 (YDSDDANPRSVSSLSNRSSPLSWRYGQSSPRLQAGDAPSVGGS) form a disordered region. A phosphoserine mark is found at Ser296, Ser308, Ser312, Ser362, and Ser391. The span at 301–315 (PRSVSSLSNRSSPLS) shows a compositional bias: low complexity. Disordered regions lie at residues 386–839 (KSGY…PLPS) and 892–989 (MSLP…PMSL). Low complexity-rich tracts occupy residues 411–425 (DESSSISSGLSDASD) and 433–448 (NASSSLNSLPSTPTAS). Residues Ser452, Ser474, Ser476, and Ser490 each carry the phosphoserine modification. Positions 476-486 (SEEKAPKKLEY) are enriched in basic and acidic residues. The span at 503 to 519 (ERPESCDDSSKGGELKK) shows a compositional bias: basic and acidic residues. Ser528 bears the Phosphoserine mark. Thr534 carries the phosphothreonine modification. Ser541 bears the Phosphoserine mark. Thr544 bears the Phosphothreonine mark. Residues 555–566 (GKPEGKATDKGK) show a composition bias toward basic and acidic residues. The residue at position 572 (Thr572) is a Phosphothreonine. Over residues 581-591 (AGRDRLSDAKK) the composition is skewed to basic and acidic residues. Composition is skewed to polar residues over residues 615 to 635 (GTATVMQTGGSATLSKIQKSS) and 645 to 655 (RKTSLDVSNSA). Ser648 bears the Phosphoserine mark. Residue Arg688 is modified to Omega-N-methylarginine. Polar residues-rich tracts occupy residues 698–710 (IDPSLLSTKQGGL) and 724–733 (GRTTPAPVNQ). Residues 731 to 756 (VNQTDREKEKAKAKAVALDSDNISLK) are a coiled coil. Ser750, Ser754, Ser760, Ser797, and Ser808 each carry phosphoserine. Polar residues predominate over residues 751-773 (DNISLKSIGSPESTPKNQASHPT). A compositionally biased stretch (low complexity) spans 805–818 (NSNSLDLPSSSDTT). Positions 902–913 (TPVPTPPAPPAA) are enriched in pro residues. Position 1000 is a phosphoserine (Ser1000). The residue at position 1006 (Thr1006) is a Phosphothreonine. Positions 1072-1163 (SSAEERMQSE…SEAQAVIQGA (92 aa)) form a coiled coil. Thr1170 is modified (phosphothreonine). Disordered regions lie at residues 1172–1204 (KELRIKRQNSSDSISSLNSITSHSSIGSSKDAD), 1244–1306 (ATPD…EKKE), 1359–1383 (LKVAPGPSSGSTPGQVPGSSALSSP), and 1810–1843 (KLYHLPPPTVGPHSIASPPEDRTVKDSTPSSLDS). The residue at position 1181 (Ser1181) is a Phosphoserine. A compositionally biased stretch (low complexity) spans 1181–1200 (SSDSISSLNSITSHSSIGSS). Positions 1246-1264 (PDSSAPSSPKLQHGSTETA) are enriched in polar residues. Ser1265 is modified (phosphoserine). Low complexity predominate over residues 1265-1275 (SPSIKSSTSSS). The stretch at 1303-1362 (EKKEVSELRSELWEKEMKLTDIRLEALNSAHQLDQLRETMHNMQLEVDLLKAENDRLKVA) forms a coiled coil. Residues 1366 to 1383 (SSGSTPGQVPGSSALSSP) show a composition bias toward polar residues. At Ser1382 the chain carries Phosphoserine.

This sequence belongs to the Nav/unc-53 family. As to quaternary structure, interacts with tubulin. As to expression, broadly expressed at low levels. Expressed at high levels in heart, skeletal muscle and placenta.

Its subcellular location is the cytoplasm. The protein localises to the cytoskeleton. Functionally, may be involved in neuronal migration. This chain is Neuron navigator 1 (NAV1), found in Homo sapiens (Human).